Reading from the N-terminus, the 247-residue chain is E3 ubiquitin ligase TRIM40 (247 aa).

Residues 12 to 55 (CPICLDPLKEAVSTDCRHLFCRMCLIRHMDKASVSGVLSCPVCR) form an RING-type zinc finger. The B box-type zinc-finger motif lies at 64 to 105 (GDNYICHTHQKRVCRFCESSRHLLCEECLQSPEHRAHTELSI). Positions 69, 72, 91, and 97 each coordinate Zn(2+). A coiled-coil region spans residues 111–148 (HYKERLNRRSRKLRKDLGDLQRLKAQEEKMLQALQVDW).

Belongs to the TRIM/RBCC family. As to quaternary structure, interacts with NEDD8.

It catalyses the reaction S-ubiquitinyl-[E2 ubiquitin-conjugating enzyme]-L-cysteine + [acceptor protein]-L-lysine = [E2 ubiquitin-conjugating enzyme]-L-cysteine + N(6)-ubiquitinyl-[acceptor protein]-L-lysine.. Its function is as follows. E3 ubiquitin-protein ligase that plays a role in the limitation of the innate immune response. Mediates inhibition of the RLR signaling pathway by ubiquitinating RIGI and IFIH1 receptors, leading to their proteasomal degradation. Also promotes the neddylation of IKBKG/NEMO, stabilizing NFKBIA, and thereby inhibiting of NF-kappa-B nuclear translocation and activation. The chain is E3 ubiquitin ligase TRIM40 (Trim40) from Rattus norvegicus (Rat).